Here is a 770-residue protein sequence, read N- to C-terminus: Penicillin-binding protein 1C (770 aa).

Residues 1 to 8 are Cytoplasmic-facing; the sequence is MPRLLTKR. Residues 9 to 29 traverse the membrane as a helical; Signal-anchor for type II membrane protein segment; the sequence is GCWITLAAAPFLLFLAAWGAD. Residues 30–770 are Periplasmic-facing; that stretch reads KLWPLPLHEV…QIATVKFVMQ (741 aa). Residues 43 to 213 form a transglycosylase region; that stretch reads RVVVAQDGTP…SRLRPDRWPE (171 aa). Glu84 functions as the Proton donor; for transglycosylase activity in the catalytic mechanism. The interval 278-559 is transpeptidase; sequence AGLQRRLEEL…FASAVPLLNQ (282 aa). Ser342 acts as the Acyl-ester intermediate; for transpeptidase activity in catalysis.

It in the N-terminal section; belongs to the glycosyltransferase 51 family. In the C-terminal section; belongs to the transpeptidase family.

It localises to the cell inner membrane. The catalysed reaction is [GlcNAc-(1-&gt;4)-Mur2Ac(oyl-L-Ala-gamma-D-Glu-L-Lys-D-Ala-D-Ala)](n)-di-trans,octa-cis-undecaprenyl diphosphate + beta-D-GlcNAc-(1-&gt;4)-Mur2Ac(oyl-L-Ala-gamma-D-Glu-L-Lys-D-Ala-D-Ala)-di-trans,octa-cis-undecaprenyl diphosphate = [GlcNAc-(1-&gt;4)-Mur2Ac(oyl-L-Ala-gamma-D-Glu-L-Lys-D-Ala-D-Ala)](n+1)-di-trans,octa-cis-undecaprenyl diphosphate + di-trans,octa-cis-undecaprenyl diphosphate + H(+). The protein operates within cell wall biogenesis; peptidoglycan biosynthesis. Transglycosylase activity can be inhibited by moenomycin. Its function is as follows. Cell wall formation. The enzyme has a penicillin-insensitive transglycosylase N-terminal domain (formation of linear glycan strands) and a transpeptidase C-terminal domain which may not be functional. In Escherichia coli (strain K12), this protein is Penicillin-binding protein 1C (pbpC).